We begin with the raw amino-acid sequence, 163 residues long: NADH-quinone oxidoreductase subunit I (163 aa).

4Fe-4S ferredoxin-type domains follow at residues 55–84 (RRYP…IEAE) and 94–123 (TRYD…EGPN). Positions 64, 67, 70, 74, 103, 106, 109, and 113 each coordinate [4Fe-4S] cluster.

Belongs to the complex I 23 kDa subunit family. NDH-1 is composed of 14 different subunits. Subunits NuoA, H, J, K, L, M, N constitute the membrane sector of the complex. The cofactor is [4Fe-4S] cluster.

The protein localises to the cell inner membrane. It catalyses the reaction a quinone + NADH + 5 H(+)(in) = a quinol + NAD(+) + 4 H(+)(out). NDH-1 shuttles electrons from NADH, via FMN and iron-sulfur (Fe-S) centers, to quinones in the respiratory chain. The immediate electron acceptor for the enzyme in this species is believed to be ubiquinone. Couples the redox reaction to proton translocation (for every two electrons transferred, four hydrogen ions are translocated across the cytoplasmic membrane), and thus conserves the redox energy in a proton gradient. This is NADH-quinone oxidoreductase subunit I from Caulobacter vibrioides (strain ATCC 19089 / CIP 103742 / CB 15) (Caulobacter crescentus).